Here is a 168-residue protein sequence, read N- to C-terminus: Transcriptional regulator MraZ (168 aa).

SpoVT-AbrB domains lie at 8-51 and 90-140; these read EYNQ…GGDR and ALNM…KADT.

This sequence belongs to the MraZ family. As to quaternary structure, forms oligomers.

Its subcellular location is the cytoplasm. It localises to the nucleoid. The polypeptide is Transcriptional regulator MraZ (Cereibacter sphaeroides (strain ATCC 17025 / ATH 2.4.3) (Rhodobacter sphaeroides)).